Consider the following 228-residue polypeptide: Transcription termination/antitermination protein NusG (228 aa).

It belongs to the NusG family.

Functionally, participates in transcription elongation, termination and antitermination. In Mycobacterium leprae (strain TN), this protein is Transcription termination/antitermination protein NusG.